A 251-amino-acid polypeptide reads, in one-letter code: Sec-independent protein translocase protein TatC (251 aa).

Transmembrane regions (helical) follow at residues 23 to 43, 73 to 93, 104 to 124, 159 to 179, 197 to 217, and 218 to 238; these read AFII…SFLL, SAFT…YLFI, IIAF…IFVF, LVIH…VIIV, IAVV…ILSQ, and FALA…CNFI.

It belongs to the TatC family. As to quaternary structure, the Tat system comprises two distinct complexes: a TatABC complex, containing multiple copies of TatA, TatB and TatC subunits, and a separate TatA complex, containing only TatA subunits. Substrates initially bind to the TatABC complex, which probably triggers association of the separate TatA complex to form the active translocon.

It is found in the cell inner membrane. Functionally, part of the twin-arginine translocation (Tat) system that transports large folded proteins containing a characteristic twin-arginine motif in their signal peptide across membranes. Together with TatB, TatC is part of a receptor directly interacting with Tat signal peptides. The sequence is that of Sec-independent protein translocase protein TatC from Rickettsia prowazekii (strain Madrid E).